The chain runs to 193 residues: Ion-translocating oxidoreductase complex subunit A (193 aa).

6 consecutive transmembrane segments (helical) span residues 5–25 (LLLF…FLGL), 39–59 (MGMG…AWLI), 63–83 (ILIP…VIAV), 102–122 (LLGI…VALL), 134–154 (ALYG…FAAI), and 171–191 (AIAL…NGLV).

The protein belongs to the NqrDE/RnfAE family. As to quaternary structure, the complex is composed of six subunits: RsxA, RsxB, RsxC, RsxD, RsxE and RsxG.

The protein localises to the cell inner membrane. Part of a membrane-bound complex that couples electron transfer with translocation of ions across the membrane. Required to maintain the reduced state of SoxR. The chain is Ion-translocating oxidoreductase complex subunit A from Shigella sonnei (strain Ss046).